A 488-amino-acid polypeptide reads, in one-letter code: MGKFLATLILFFQFCPLIFGDYSPSCCTLTIGVSSYHSKPCNPAQPVCSWTLDLLALSADQALQPPCPNLVSYSSYHATYSLYLFPHWTKKPNRNGGGYYSASYSDPCSLKCPYLGCQSWTCPYTGAVSSPYWKFQHDVNFTQEVSRLNINLHFSKCGFPFSLLVDAPGYDPIWFLNTEPSQLPPTAPPLLPHSNLDHILEPSIPWKSKLLTLVQLTLQSTNYTCIVCIDRASLSTWHVLYSPNVSVPSSSSTPLLYPSLALPAPHLTLPFNWTHCFDPQIQAIVSSPCHNSLILPPFSLSPVPTLGSRSRRAVPVAVWLVSALAMGAGVAGGITGSMSLASGKSLLHEVDKDISQLTQAIVKNHKNLLKIAQYAAQNRRGLDLLFWEQGGLCKALQEQCRFPNITNSHVPILQERPPLENRVLTGWGLNWDLGLSQWAREALQTGITLVALLLLVILAGPCILRQLRHLPSRVRYPHYSLIKPESSL.

The first 20 residues, 1-20 (MGKFLATLILFFQFCPLIFG), serve as a signal peptide directing secretion. Residues 21 to 442 (DYSPSCCTLT…LGLSQWAREA (422 aa)) are Extracellular-facing. 2 N-linked (GlcNAc...) asparagine; by host glycosylation sites follow: asparagine 140 and asparagine 222. The CXXC signature appears at 225-228 (CIVC). N-linked (GlcNAc...) asparagine; by host glycans are attached at residues asparagine 244 and asparagine 272. Residues 313 to 333 (AVPVAVWLVSALAMGAGVAGG) form a fusion peptide region. 2 coiled-coil regions span residues 341 to 387 (ASGK…LLFW) and 397 to 429 (QEQCRFPNITNSHVPILQERPPLENRVLTGWGL). Residues 376-392 (AQNRRGLDLLFWEQGGL) form an immunosuppression region. Cysteine 393 and cysteine 400 are disulfide-bonded. Asparagine 404 carries an N-linked (GlcNAc...) asparagine; by host glycan. A helical transmembrane segment spans residues 443–463 (LQTGITLVALLLLVILAGPCI). Cysteine 462 carries S-palmitoyl cysteine; by host lipidation. Residues 464–488 (LRQLRHLPSRVRYPHYSLIKPESSL) are Cytoplasmic-facing.

In terms of assembly, the mature envelope protein (Env) consists of a trimer of SU-TM heterodimers attached by non-covalent interactions or by a labile interchain disulfide bond. Specific enzymatic cleavages in vivo yield mature proteins. Envelope glycoproteins are synthesized as an inactive precursor that is N-glycosylated and processed likely by host cell furin or by a furin-like protease in the Golgi to yield the mature SU and TM proteins. The cleavage site between SU and TM requires the minimal sequence [KR]-X-[KR]-R. Post-translationally, the transmembrane protein is palmitoylated.

The protein localises to the virion membrane. It localises to the host cell membrane. The surface protein (SU) attaches the virus to the host cell by binding to its receptor. This interaction triggers the refolding of the transmembrane protein (TM) and is thought to activate its fusogenic potential by unmasking its fusion peptide. Fusion occurs at the host cell plasma membrane. In terms of biological role, the transmembrane protein (TM) acts as a class I viral fusion protein. Under the current model, the protein has at least 3 conformational states: pre-fusion native state, pre-hairpin intermediate state, and post-fusion hairpin state. During viral and target cell membrane fusion, the coiled coil regions (heptad repeats) assume a trimer-of-hairpins structure, positioning the fusion peptide in close proximity to the C-terminal region of the ectodomain. The formation of this structure appears to drive apposition and subsequent fusion of viral and target cell membranes. Membranes fusion leads to delivery of the nucleocapsid into the cytoplasm. This Homo sapiens (Human) protein is Envelope glycoprotein gp62 (env).